We begin with the raw amino-acid sequence, 44 residues long: Opistoporin-2 (44 aa).

In terms of tissue distribution, expressed by the venom gland.

It is found in the secreted. It localises to the target cell membrane. In terms of biological role, at high concentrations, acts as a pore former in cellular membranes and causes the leakage of the cells. At submicromolar concentrations, degranulates granulocytes and has a weak hemolytic activity against human erythrocytes. Also strongly inhibits the production of superoxide anions. Has a strong antibacterial activity against Gram-negative bacteria but is less active against Gram-positive bacteria. Also has antifungal activity. The sequence is that of Opistoporin-2 from Opistophthalmus carinatus (African yellow leg scorpion).